A 1389-amino-acid polypeptide reads, in one-letter code: DNA-directed RNA polymerase subunit beta'' (1389 aa).

The Zn(2+) site is built by Cys-220, Cys-290, Cys-297, and Cys-300.

Belongs to the RNA polymerase beta' chain family. RpoC2 subfamily. As to quaternary structure, in plastids the minimal PEP RNA polymerase catalytic core is composed of four subunits: alpha, beta, beta', and beta''. When a (nuclear-encoded) sigma factor is associated with the core the holoenzyme is formed, which can initiate transcription. The cofactor is Zn(2+).

The protein resides in the plastid. It localises to the chloroplast. The catalysed reaction is RNA(n) + a ribonucleoside 5'-triphosphate = RNA(n+1) + diphosphate. Functionally, DNA-dependent RNA polymerase catalyzes the transcription of DNA into RNA using the four ribonucleoside triphosphates as substrates. This chain is DNA-directed RNA polymerase subunit beta'', found in Chloranthus spicatus (Chulantree).